Here is a 188-residue protein sequence, read N- to C-terminus: Elongation factor P (188 aa).

Belongs to the elongation factor P family.

The protein resides in the cytoplasm. Its pathway is protein biosynthesis; polypeptide chain elongation. Its function is as follows. Involved in peptide bond synthesis. Stimulates efficient translation and peptide-bond synthesis on native or reconstituted 70S ribosomes in vitro. Probably functions indirectly by altering the affinity of the ribosome for aminoacyl-tRNA, thus increasing their reactivity as acceptors for peptidyl transferase. This chain is Elongation factor P, found in Sulfurimonas denitrificans (strain ATCC 33889 / DSM 1251) (Thiomicrospira denitrificans (strain ATCC 33889 / DSM 1251)).